The primary structure comprises 466 residues: Cytochrome c-552 (466 aa).

An N-terminal signal peptide occupies residues 1–27; it reads MVRNLTKKSFALSALVAASLMASGVMA. His87 serves as a coordination point for heme c. Residues Cys115, Cys118, and Lys119 each contribute to the heme site. The heme c site is built by Cys153, Cys156, His157, Cys195, Cys198, and His199. Residues Glu201, Tyr202, Lys250, and Gln252 each coordinate Ca(2+). Tyr202 serves as a coordination point for substrate. His253 is a binding site for substrate. Positions 264, 271, 274, 275, 290, 303, 306, 307, and 382 each coordinate heme c.

The protein belongs to the cytochrome c-552 family. Ca(2+) serves as cofactor. The cofactor is heme c.

Its subcellular location is the periplasm. It carries out the reaction 6 Fe(III)-[cytochrome c] + NH4(+) + 2 H2O = 6 Fe(II)-[cytochrome c] + nitrite + 8 H(+). The protein operates within nitrogen metabolism; nitrate reduction (assimilation). Its function is as follows. Catalyzes the reduction of nitrite to ammonia, consuming six electrons in the process. The sequence is that of Cytochrome c-552 from Shewanella sediminis (strain HAW-EB3).